Here is a 185-residue protein sequence, read N- to C-terminus: Ribosome-recycling factor (185 aa).

Belongs to the RRF family.

Its subcellular location is the cytoplasm. In terms of biological role, responsible for the release of ribosomes from messenger RNA at the termination of protein biosynthesis. May increase the efficiency of translation by recycling ribosomes from one round of translation to another. The polypeptide is Ribosome-recycling factor (Francisella tularensis subsp. tularensis (strain FSC 198)).